The following is a 240-amino-acid chain: Ribosome maturation protein SDO1 homolog (240 aa).

This sequence belongs to the SDO1/SBDS family.

In Methanocaldococcus jannaschii (strain ATCC 43067 / DSM 2661 / JAL-1 / JCM 10045 / NBRC 100440) (Methanococcus jannaschii), this protein is Ribosome maturation protein SDO1 homolog.